Reading from the N-terminus, the 505-residue chain is Cyclic AMP-dependent transcription factor ATF-2 (505 aa).

Residues 1 to 7 (MKFKLHV) carry the Nuclear export signal 1 (N-NES) motif. Residues 25 to 49 (FLCTAPGCGQRFTNEDHLAVHKHKH) form a C2H2-type zinc finger. T52 is modified (phosphothreonine; by PKC/PRKCH). Phosphoserine; by VRK1 is present on S62. At T69 the chain carries Phosphothreonine; by MAPK11 and MAPK14. Phosphothreonine; by MAPK1, MAPK3, MAPK11, MAPK12, MAPK14 and PLK3 is present on T71. T73 is modified (phosphothreonine; by VRK1). Residues S90 and S112 each carry the phosphoserine modification. T116 is modified (phosphothreonine). Phosphoserine; by PKC/PRKCA and PKC/PRKCB is present on S121. Disordered regions lie at residues 125–155 (EPSV…PLAQ) and 259–373 (PGIP…RQKR). S136 carries the post-translational modification Phosphoserine. Residues 282 to 293 (LTQQHPPVTNGD) are compositionally biased toward polar residues. Residues 296–299 (KGHG) form an essential for its histone acetyltransferase activity region. Residues 318 to 334 (PATSTTETPASPAHTTP) show a composition bias toward low complexity. The residue at position 328 (S328) is a Phosphoserine. A Phosphoserine; by PKC/PRKCA and PKC/PRKCB modification is found at S340. Residues 346–363 (AANEDPDEKRRKFLERNR) show a composition bias toward basic and acidic residues. Residues 352–415 (DEKRRKFLER…AQLKQLLLAH (64 aa)) enclose the bZIP domain. Residues 354–374 (KRRKFLERNRAAASRCRQKRK) form a basic motif region. Position 357 is an N6-acetyllysine (K357). S367 is modified (phosphoserine; by PKC/PRKCA and PKC/PRKCB). N6-acetyllysine is present on K374. A leucine-zipper region spans residues 380 to 408 (LEKKAEDLSSLNGQLQSEVTLLRNEVAQL). The Nuclear export signal 2 (C-NES) motif lies at 405–414 (VAQLKQLLLA). Residues 425-472 (KKSGYHTADKDDSSEDISVPSSPHTEAIQHSSVSTSNGVSSTSKAEAV) form a disordered region. 2 positions are modified to phosphoserine: S442 and S446. Residues 443 to 454 (VPSSPHTEAIQH) are compositionally biased toward polar residues. A compositionally biased stretch (low complexity) spans 455–467 (SSVSTSNGVSSTS). Residues S490 and S498 each carry the phosphoserine; by ATM modification.

It belongs to the bZIP family. ATF subfamily. Binds DNA as a dimer and can form a homodimer in the absence of DNA. Can form a heterodimer with JUN. Heterodimerization is essential for its transcriptional activity. Interacts with SMAD3 and SMAD4. Binds through its N-terminal region to UTF1 which acts as a coactivator of ATF2 transcriptional activity. Interacts with the HK1/VDAC1 complex. Interacts with NBN, MRE11, XPO1, KAT5 and CUL3. In terms of processing, phosphorylation of Thr-69 by MAPK14 and MAPK11, and at Thr-71 by MAPK1/ERK2, MAPK3/ERK1, MAPK11, MAPK12 and MAPK14 in response to external stimulus like insulin causes increased transcriptional activity. Phosphorylated by PLK3 following hyperosmotic stress. Also phosphorylated and activated by JNK and CaMK4. ATM-mediated phosphorylation at Ser-490 and Ser-498 stimulates its function in DNA damage response. Phosphorylation at Ser-62, Thr-73 and Ser-121 activates its transcriptional activity. Phosphorylation at Thr-69 or Thr-71 enhances acetylation of histones H2B and H4. As to expression, ubiquitously expressed, with more abundant expression in the brain.

It localises to the nucleus. The protein resides in the cytoplasm. Its subcellular location is the mitochondrion outer membrane. Functionally, transcriptional activator which regulates the transcription of various genes, including those involved in anti-apoptosis, cell growth, and DNA damage response. Dependent on its binding partner, binds to CRE (cAMP response element) consensus sequences (5'-TGACGTCA-3') or to AP-1 (activator protein 1) consensus sequences (5'-TGACTCA-3'). In the nucleus, contributes to global transcription and the DNA damage response, in addition to specific transcriptional activities that are related to cell development, proliferation and death. In the cytoplasm, interacts with and perturbs HK1- and VDAC1-containing complexes at the mitochondrial outer membrane, thereby impairing mitochondrial membrane potential, inducing mitochondrial leakage and promoting cell death. The phosphorylated form (mediated by ATM) plays a role in the DNA damage response and is involved in the ionizing radiation (IR)-induced S phase checkpoint control and in the recruitment of the MRN complex into the IR-induced foci (IRIF). Exhibits histone acetyltransferase (HAT) activity which specifically acetylates histones H2B and H4 in vitro. In concert with CUL3 and RBX1, promotes the degradation of KAT5 thereby attenuating its ability to acetylate and activate ATM. Can elicit oncogenic or tumor suppressor activities depending on the tissue or cell type. The polypeptide is Cyclic AMP-dependent transcription factor ATF-2 (ATF2) (Homo sapiens (Human)).